The chain runs to 683 residues: Multidrug resistance protein MdtO (683 aa).

9 consecutive transmembrane segments (helical) span residues 43-63 (VILISMTFEIPFVALSLAVLF), 75-95 (FVAILFVVATVLEIASLFLIY), 100-120 (GEPLIRLIIAGPILMSCMFLM), 125-145 (LGLVFFAVAIVAIYGQTFPAM), 158-178 (WCIVVGLYPTLLMTLIGVLWF), 402-422 (FGGAFCGAILALLFTLLVMPW), 426-446 (IVELLFVLAPIFLLGAWIATS), 457-477 (MVVTFALATLENVFGPVYDLV), and 483-503 (ALGIIIGTVVSAVIYTFVWPE).

The protein belongs to the MdtO family. In terms of assembly, could be part of a tripartite efflux system composed of MdtN, MdtO and MdtP.

The protein localises to the cell inner membrane. Functionally, could be involved in resistance to puromycin, acriflavine and tetraphenylarsonium chloride. In Escherichia coli O6:H1 (strain CFT073 / ATCC 700928 / UPEC), this protein is Multidrug resistance protein MdtO (mdtO).